A 246-amino-acid polypeptide reads, in one-letter code: Probable transcriptional regulatory protein APJL_1171 (246 aa).

Belongs to the TACO1 family.

The protein resides in the cytoplasm. The protein is Probable transcriptional regulatory protein APJL_1171 of Actinobacillus pleuropneumoniae serotype 3 (strain JL03).